Consider the following 117-residue polypeptide: Large ribosomal subunit protein bL19 (117 aa).

The protein belongs to the bacterial ribosomal protein bL19 family.

Its function is as follows. This protein is located at the 30S-50S ribosomal subunit interface and may play a role in the structure and function of the aminoacyl-tRNA binding site. The chain is Large ribosomal subunit protein bL19 from Shewanella piezotolerans (strain WP3 / JCM 13877).